We begin with the raw amino-acid sequence, 255 residues long: Ribonuclease HII (255 aa).

One can recognise an RNase H type-2 domain in the interval 72–255; it reads RLIAGVDEAG…KTFAPVQSYC (184 aa). Positions 78, 79, and 170 each coordinate a divalent metal cation.

This sequence belongs to the RNase HII family. The cofactor is Mn(2+). Requires Mg(2+) as cofactor.

It localises to the cytoplasm. It carries out the reaction Endonucleolytic cleavage to 5'-phosphomonoester.. Functionally, endonuclease that specifically degrades the RNA of RNA-DNA hybrids. The chain is Ribonuclease HII from Bacillus velezensis (strain DSM 23117 / BGSC 10A6 / LMG 26770 / FZB42) (Bacillus amyloliquefaciens subsp. plantarum).